A 396-amino-acid chain; its full sequence is Phospholipase A1-II 4 (396 aa).

Catalysis depends on Ser221, which acts as the Acyl-ester intermediate. Active-site charge relay system residues include Ser221, Asp282, and His319.

This sequence belongs to the AB hydrolase superfamily. Lipase family.

The protein resides in the cytoplasm. Acylhydrolase that catalyzes the hydrolysis of phospholipids at the sn-1 position. This chain is Phospholipase A1-II 4, found in Oryza sativa subsp. japonica (Rice).